Here is a 402-residue protein sequence, read N- to C-terminus: Phosphoribulokinase, chloroplastic (402 aa).

The N-terminal 51 residues, 1-51 (MAVCTVYTIPTTTHLGSSFNQNNKQVFFNYKRSSSSNNTLFTTRPSYVITC), are a transit peptide targeting the chloroplast. A disulfide bridge links Cys-67 with Cys-106.

Belongs to the phosphoribulokinase family.

Its subcellular location is the plastid. It is found in the chloroplast. It carries out the reaction D-ribulose 5-phosphate + ATP = D-ribulose 1,5-bisphosphate + ADP + H(+). Its pathway is carbohydrate biosynthesis; Calvin cycle. Its activity is regulated as follows. Light regulated via thioredoxin by reversible oxidation/reduction of sulfhydryl/disulfide groups. This chain is Phosphoribulokinase, chloroplastic, found in Spinacia oleracea (Spinach).